Here is a 1264-residue protein sequence, read N- to C-terminus: Protein fantom (1264 aa).

4 coiled-coil regions span residues 64-143 (LKQH…LQVQ), 196-268 (YSNS…NVET), 299-454 (LRIS…ESDI), and 488-555 (NKDL…VHLL). C2 domains follow at residues 577 to 714 (KQYK…FCTT) and 773 to 897 (AATT…SGIF). Disordered regions lie at residues 979–1018 (DTISHPSPETSPPPKDIKDSSPEVGPKPENGLSAVAYPSK) and 1047–1093 (QLAS…NTKQ). Positions 1056-1080 (SEDETEITEELEPEDEDRSASDSDD) are enriched in acidic residues.

This sequence belongs to the RPGRIP1 family. As to quaternary structure, interacts with NPHP4 and NPHP1; NPHP1, NPHP4 and RPGRIP1L are proposed to form a functional NPHP1-4-8 module localized to cell-cell contacts and the ciliary transition zone; NPHP4 mediates the interaction between NPHP1 and RPGRIP1L. Interacts with IQCB1; the interaction likely requires additional interactors. Interacts with TBXA2R (via C-terminus), RPGR, NEK4. Interacts with NPHP4, INVS and DVL2; proposed to form a complex involved in DVL2 stabilization. Interacts with PSMD2. Ubiquitously expressed. Not found in heart and skin.

It is found in the cytoplasm. It localises to the cytoskeleton. The protein resides in the cilium basal body. Its subcellular location is the cilium axoneme. The protein localises to the microtubule organizing center. It is found in the centrosome. It localises to the cell junction. The protein resides in the tight junction. In terms of biological role, negatively regulates signaling through the G-protein coupled thromboxane A2 receptor (TBXA2R). May be involved in mechanisms like programmed cell death, craniofacial development, patterning of the limbs, and formation of the left-right axis. Involved in the organization of apical junctions; the function is proposed to implicate a NPHP1-4-8 module. Does not seem to be strictly required for ciliogenesis. Involved in establishment of planar cell polarity such as in cochlear sensory epithelium and is proposed to implicate stabilization of disheveled proteins. Involved in regulation of proteasomal activity at the primary cilium probably implicating association with PSDM2. The chain is Protein fantom (Rpgrip1l) from Mus musculus (Mouse).